A 140-amino-acid polypeptide reads, in one-letter code: C-type lectin 6 (140 aa).

The signal sequence occupies residues 1-23 (MGRLVFVSFGLLVVFLSLSGTGA). Disulfide bonds link Cys25/Cys36, Cys53/Cys138, and Cys115/Cys130. The 108-residue stretch at 32-139 (YEGHCYRVFQ…CSKTHNVICK (108 aa)) folds into the C-type lectin domain.

It belongs to the snaclec family. Heteromultimer; disulfide-linked. In terms of tissue distribution, expressed by the venom gland.

It is found in the secreted. Functionally, interferes with one step of hemostasis (modulation of platelet aggregation, or coagulation cascade, for example). This Crotalus adamanteus (Eastern diamondback rattlesnake) protein is C-type lectin 6.